A 228-amino-acid polypeptide reads, in one-letter code: Dolichyl-phosphate hexose transferase HVO_1613 (228 aa).

It belongs to the glycosyltransferase 2 family.

Glycosyltransferase that adds a monosaccharide to dolichol phosphate, thereby being responsible for generating one of the three monosaccharide-modified dolichol phosphates. The subunit onto which additional sugars are added is not known. The chain is Dolichyl-phosphate hexose transferase HVO_1613 from Haloferax volcanii (strain ATCC 29605 / DSM 3757 / JCM 8879 / NBRC 14742 / NCIMB 2012 / VKM B-1768 / DS2) (Halobacterium volcanii).